The following is a 737-amino-acid chain: Alpha-adducin (737 aa).

Met1 is modified (N-acetylmethionine). A disordered region spans residues 1–21; it reads MNGDSRAAVVTSPPPTTAPHK. Ser12 carries the post-translational modification Phosphoserine. At Ser59 the chain carries Phosphoserine; by PKA. At Ser64 the chain carries Phosphoserine. Thr331 carries the phosphothreonine modification. Residues Ser334, Ser353, Ser355, Ser358, and Ser366 each carry the phosphoserine modification. Ser408 carries the phosphoserine; by PKA modification. A compositionally biased stretch (polar residues) spans 419 to 430; that stretch reads YSFTSDGDSGTC. Disordered stretches follow at residues 419–490 and 576–737; these read YSFT…NLFV and RREV…KSES. A Phosphoserine modification is found at Ser427. Thr429 bears the Phosphothreonine mark. Ser431 bears the Phosphoserine mark. Ser436 carries the phosphoserine; by PKA modification. Thr445 carries the post-translational modification Phosphothreonine; by ROCK2. A phosphoserine mark is found at Ser464 and Ser465. Residue Thr480 is modified to Phosphothreonine; by ROCK2. At Ser481 the chain carries Phosphoserine; by PKA. Basic and acidic residues predominate over residues 576–601; it reads RREVERKQKGSEENLDEAREQKEKSP. Phosphoserine is present on residues Ser586, Ser600, and Ser613. Residues 602–614 show a composition bias toward pro residues; that stretch reads PDQPAVPYPPPST. Position 614 is a phosphothreonine (Thr614). 4 positions are modified to phosphoserine: Ser678, Ser707, Ser710, and Ser714. Low complexity predominate over residues 687 to 714; that stretch reads PVAEEAAPSAAEEGAAADPGSDGSPGKS. Positions 715–737 are enriched in basic residues; sequence PSKKKKKFRTPSFLKKSKKKSES. Ser716 is modified (phosphoserine; by PKC). An interaction with calmodulin region spans residues 717 to 734; it reads KKKKKFRTPSFLKKSKKK. Phosphoserine; by PKA and PKC is present on Ser726.

The protein belongs to the aldolase class II family. Adducin subfamily. Heterodimer of an alpha and a beta subunit or an alpha and a gamma subunit.

It is found in the cytoplasm. The protein localises to the cytoskeleton. It localises to the cell membrane. In terms of biological role, membrane-cytoskeleton-associated protein that promotes the assembly of the spectrin-actin network. Binds to calmodulin. This is Alpha-adducin (ADD1) from Pongo abelii (Sumatran orangutan).